The primary structure comprises 79 residues: Hematopoietic cell signal transducer (79 aa).

Residues 1–18 (MAPPGHLLFLFLLPVAAS) form the signal peptide. Topologically, residues 19–35 (QTNEGSCSGCGPLSLPL) are extracellular. The chain crosses the membrane as a helical span at residues 36 to 56 (LAGLVAADAVMSLLIVGVVFV). Residues 57–79 (CMRLHSRPAQEDGRVYINMPGRG) are Cytoplasmic-facing. Residue Y72 is modified to Phosphotyrosine. The tract at residues 72-74 (YIN) is GRB2 binding site. The tract at residues 72-75 (YINM) is PIK3R1 binding site.

Belongs to the DAP10 family. As to quaternary structure, homodimer; Disulfide-linked. Heterohexamer composed of four subunits of HCST/DAP10 and two subunits of KLRK1. Interacts (via transmembrane domain) with KLRK1 (via transmembrane domain); the interaction is required for KLRK1 NK cell surface and induces NK cell-mediated cytotoxicity. Interacts with PIK3R1 and GRB2. Interacts with CLEC5A. Forms an CLEC5A/TYROBP/HCST trimolecular complex depending almost solely on TYROBP. Interacts with CD300H. In terms of processing, phosphorylated; PIK3R1 and GRB2 associate specifically with tyrosine-phosphorylated HCST. O-glycosylated.

The protein resides in the membrane. Transmembrane adapter protein which associates with KLRK1 to form an activation receptor KLRK1-HCST in lymphoid and myeloid cells; this receptor plays a major role in triggering cytotoxicity against target cells expressing cell surface ligands such as MHC class I chain-related MICA and MICB, and UL16-binding proteins (ULBPs); these ligands are up-regulated by stress conditions and pathological state such as viral infection and tumor transformation. Functions as a docking site for PI3-kinase PIK3R1 and GRB2. Interaction of ULBPs with KLRK1-HCST triggers calcium mobilization and activation of the PIK3R1, MAP2K/ERK, and JAK2/STAT5 signaling pathways. Both PIK3R1 and GRB2 are required for full KLRK1-HCST-mediated activation and ultimate killing of target cells. In NK cells, KLRK1-HCST signaling directly induces cytotoxicity and enhances cytokine production initiated via DAP12/TYROBP-associated receptors. In T-cells, it provides primarily costimulation for TCR-induced signals. KLRK1-HCST receptor plays a role in immune surveillance against tumors and is required for cytolysis of tumors cells; indeed, melanoma cells that do not express KLRK1 ligands escape from immune surveillance mediated by NK cells. The polypeptide is Hematopoietic cell signal transducer (Hcst) (Rattus norvegicus (Rat)).